A 289-amino-acid polypeptide reads, in one-letter code: Urease accessory protein UreD (289 aa).

The protein belongs to the UreD family. UreD, UreF and UreG form a complex that acts as a GTP-hydrolysis-dependent molecular chaperone, activating the urease apoprotein by helping to assemble the nickel containing metallocenter of UreC. The UreE protein probably delivers the nickel.

Its subcellular location is the cytoplasm. In terms of biological role, required for maturation of urease via the functional incorporation of the urease nickel metallocenter. This is Urease accessory protein UreD from Cupriavidus pinatubonensis (strain JMP 134 / LMG 1197) (Cupriavidus necator (strain JMP 134)).